A 739-amino-acid chain; its full sequence is Catalase-peroxidase (739 aa).

Residues 1-23 (MLKKIVTALGMSGMLLASNSAIA) form the signal peptide. Residues 100–221 (WHDAGTYRIY…YAATQMGLIY (122 aa)) constitute a cross-link (tryptophyl-tyrosyl-methioninium (Trp-Tyr) (with M-247)). H101 serves as the catalytic Proton acceptor. A cross-link (tryptophyl-tyrosyl-methioninium (Tyr-Met) (with W-100)) is located at residues 221–247 (YVNPEGPDGKPDIKGAASEIRQAFRAM). H262 serves as a coordination point for heme b.

The protein belongs to the peroxidase family. Peroxidase/catalase subfamily. As to quaternary structure, homodimer or homotetramer. It depends on heme b as a cofactor. Post-translationally, formation of the three residue Trp-Tyr-Met cross-link is important for the catalase, but not the peroxidase activity of the enzyme.

The catalysed reaction is H2O2 + AH2 = A + 2 H2O. It catalyses the reaction 2 H2O2 = O2 + 2 H2O. Functionally, bifunctional enzyme with both catalase and broad-spectrum peroxidase activity. This chain is Catalase-peroxidase, found in Francisella tularensis subsp. novicida (strain U112).